The following is a 583-amino-acid chain: Nuclear distribution protein nudE homolog 1 (583 aa).

Positions 14 to 195 (ATLEDTLGWY…QDKFKKQESR (182 aa)) form a coiled coil. 3 disordered regions span residues 34–68 (LAEF…KAET), 211–339 (TFDG…TSNS), and 358–583 (HSVR…GETY). Residues 35–67 (AEFRDSSRELEQELEKDIERAEKQERHHQEKAE) show a composition bias toward basic and acidic residues. Polar residues-rich tracts occupy residues 219–235 (PGST…TDSK), 279–319 (RSRL…TMRT), 329–339 (SASNKLPTSNS), 379–392 (NVYS…SITI), and 399–422 (SGSA…STPK). Over residues 453 to 469 (RPSSRASTSYATSYARP) the composition is skewed to low complexity. The span at 529–538 (RRGTYSSQGG) shows a compositional bias: polar residues.

Belongs to the nudE family. Self-associates. Interacts with PAC1.

It is found in the cytoplasm. The protein localises to the cytoskeleton. Its function is as follows. Required for nuclear migration. The sequence is that of Nuclear distribution protein nudE homolog 1 (NDE1) from Gibberella zeae (strain ATCC MYA-4620 / CBS 123657 / FGSC 9075 / NRRL 31084 / PH-1) (Wheat head blight fungus).